A 501-amino-acid chain; its full sequence is Cytoplasmic tRNA 2-thiolation protein 2 (501 aa).

Positions 1 to 12 (MCEMSEEYRESA) are enriched in basic and acidic residues. Disordered regions lie at residues 1 to 23 (MCEMSEEYRESAPKGPPPPRLGT) and 192 to 214 (GVERQSQHCAQDPQSPTGPPTTA). N-acetylcysteine is present on C2. S492 is subject to Phosphoserine.

This sequence belongs to the CTU2/NCS2 family. Component of a complex at least composed of URM1, CTU2/NCS2 and CTU1/ATPBD3.

Its subcellular location is the cytoplasm. It participates in tRNA modification; 5-methoxycarbonylmethyl-2-thiouridine-tRNA biosynthesis. In terms of biological role, plays a central role in 2-thiolation of mcm(5)S(2)U at tRNA wobble positions of tRNA(Lys), tRNA(Glu) and tRNA(Gln). May act by forming a heterodimer with CTU1/ATPBD3 that ligates sulfur from thiocarboxylated URM1 onto the uridine of tRNAs at wobble position. The chain is Cytoplasmic tRNA 2-thiolation protein 2 from Bos taurus (Bovine).